Consider the following 81-residue polypeptide: Cytotoxin 1a (81 aa).

An N-terminal signal peptide occupies residues 1-21 (MKTLLLTLVVVTIVCLDLGYT). Cystine bridges form between Cys-24–Cys-42, Cys-35–Cys-59, Cys-63–Cys-74, and Cys-75–Cys-80.

Belongs to the three-finger toxin family. Short-chain subfamily. Type IA cytotoxin sub-subfamily. In terms of assembly, monomer in solution; Homodimer and oligomer in the presence of negatively charged lipids forming a pore with a size ranging between 20 and 30 Angstroms. As to expression, expressed by the venom gland.

The protein localises to the secreted. Its subcellular location is the target cell membrane. Shows cytolytic activity on many different cells by forming pore in lipid membranes. In vivo, increases heart rate or kills the animal by cardiac arrest. In addition, it binds to heparin with high affinity, interacts with Kv channel-interacting protein 1 (KCNIP1) in a calcium-independent manner, and binds to integrin alpha-V/beta-3 (ITGAV/ITGB3) with moderate affinity. The chain is Cytotoxin 1a from Naja atra (Chinese cobra).